Reading from the N-terminus, the 519-residue chain is Histidine ammonia-lyase (519 aa).

A cross-link (5-imidazolinone (Ala-Gly)) is located at residues 146–148; it reads ASG. Serine 147 carries the post-translational modification 2,3-didehydroalanine (Ser).

This sequence belongs to the PAL/histidase family. In terms of processing, contains an active site 4-methylidene-imidazol-5-one (MIO), which is formed autocatalytically by cyclization and dehydration of residues Ala-Ser-Gly.

It is found in the cytoplasm. It carries out the reaction L-histidine = trans-urocanate + NH4(+). Its pathway is amino-acid degradation; L-histidine degradation into L-glutamate; N-formimidoyl-L-glutamate from L-histidine: step 1/3. This Bradyrhizobium diazoefficiens (strain JCM 10833 / BCRC 13528 / IAM 13628 / NBRC 14792 / USDA 110) protein is Histidine ammonia-lyase.